The sequence spans 544 residues: Ribosomal oxygenase 1 (544 aa).

Residues 1 to 78 form a disordered region; the sequence is MERKHMSALS…HEGERDCREM (78 aa). Positions 10 to 19 are enriched in polar residues; it reads SIYQSLSGGK. Basic residues predominate over residues 42–53; sequence PSKKATKKKGTK. A compositionally biased stretch (basic and acidic residues) spans 63–78; that stretch reads SSEKEKHEGERDCREM. A JmjC domain is found at 197 to 342; the sequence is CSIRMLNPQA…DLMLKLMPAA (146 aa). Fe cation is bound by residues H243, D245, and H308.

It belongs to the ROX family. NO66 subfamily. Requires Fe(2+) as cofactor.

It localises to the nucleus. The protein localises to the nucleolus. It is found in the nucleoplasm. The catalysed reaction is N(6),N(6)-dimethyl-L-lysyl(36)-[histone H3] + 2 2-oxoglutarate + 2 O2 = L-lysyl(36)-[histone H3] + 2 formaldehyde + 2 succinate + 2 CO2. It carries out the reaction N(6)-methyl-L-lysyl-[protein] + 2-oxoglutarate + O2 = L-lysyl-[protein] + formaldehyde + succinate + CO2. It catalyses the reaction L-histidyl-[protein] + 2-oxoglutarate + O2 = (3S)-3-hydroxy-L-histidyl-[protein] + succinate + CO2. In terms of biological role, oxygenase that can act as both a histone lysine demethylase and a ribosomal histidine hydroxylase. Specifically demethylates 'Lys-4' (H3K4me) and 'Lys-36' (H3K36me) of histone H3, thereby playing a central role in histone code. Preferentially demethylates trimethylated H3 'Lys-4' (H3K4me3) and monomethylated H3 'Lys-4' (H3K4me1) residues, while it has weaker activity for dimethylated H3 'Lys-36' (H3K36me2). Also catalyzes demethylation of non-histone proteins. Also catalyzes the hydroxylation of 60S ribosomal protein L8 on 'His-216', thereby playing a role in ribosome biogenesis. This chain is Ribosomal oxygenase 1 (riox1), found in Danio rerio (Zebrafish).